The sequence spans 285 residues: Cytochrome c1 (285 aa).

The first 22 residues, Met-1–Ala-22, serve as a signal peptide directing secretion. Residues Cys-58, Cys-61, His-62, and Met-207 each coordinate heme c. The chain crosses the membrane as a helical span at residues Ala-251 to Thr-269.

In terms of assembly, the main subunits of complex b-c1 are: cytochrome b, cytochrome c1 and the Rieske protein. Binds 1 heme c group covalently per subunit.

Its subcellular location is the cell membrane. Component of the ubiquinol-cytochrome c reductase complex (complex III or cytochrome b-c1 complex), which is a respiratory chain that generates an electrochemical potential coupled to ATP synthesis. c1 functions as an electron donor to cytochrome c. In Cereibacter sphaeroides (Rhodobacter sphaeroides), this protein is Cytochrome c1 (petC).